Reading from the N-terminus, the 429-residue chain is Methanol:N,N-dimethyl-4-nitrosoaniline oxidoreductase (429 aa).

This sequence belongs to the iron-containing alcohol dehydrogenase family. In terms of assembly, homodecamer. Mg(2+) is required as a cofactor. Requires Zn(2+) as cofactor. It depends on NADPH as a cofactor.

It catalyses the reaction methanol + A = formaldehyde + AH2. With respect to regulation, inhibited by azide and hydrazine. Catalyzes the oxidation of methanol to yield formaldehyde. While the in vivo electron acceptor is not known, N,N-dimethyl-4-nitrosoaniline (NDMA) can serve this function in vitro and is reduced to 4-(hydroxylamino)-N,N-dimethylaniline. It can also use various other primary alcohols, polyols and formaldehyde. In addition, MNO is able to produce methylformate from methanol plus formaldehyde, and possesses a formaldehyde dismutase and a NADH-dependent formaldehyde reductase activity. The polypeptide is Methanol:N,N-dimethyl-4-nitrosoaniline oxidoreductase (mno) (Amycolatopsis methanolica).